The sequence spans 336 residues: Glutamyl endopeptidase (336 aa).

A signal peptide spans 1–29 (MKGKFLKVSSLFVATLTTATLVSSPAANA). A propeptide spanning residues 30-68 (LSSKAMDNHPQQTQSSKQQTPKIQKGGNLKPLEQREHAN) is cleaved from the precursor. Positions 34 to 61 (AMDNHPQQTQSSKQQTPKIQKGGNLKPL) are disordered. Residues 39 to 51 (PQQTQSSKQQTPK) are compositionally biased toward low complexity. Residues His119, Asp161, and Ser237 each act as charge relay system in the active site. A disordered region spans residues 283–336 (FANDDQPNNPDNPDNPNNPDNPNNPDEPNNPDNPNNPDNPDNGDTNNSDNPDAA). Residues 286–336 (DDQPNNPDNPDNPNNPDNPNNPDEPNNPDNPNNPDNPDNGDTNNSDNPDAA) show a composition bias toward low complexity. A run of 11 repeats spans residues 289 to 291 (PNN), 292 to 294 (PDN), 295 to 297 (PDN), 298 to 300 (PNN), 301 to 303 (PDN), 304 to 306 (PNN), 310 to 312 (PNN), 313 to 315 (PDN), 316 to 318 (PNN), 319 to 321 (PDN), and 322 to 324 (PDN). Positions 289–324 (PNNPDNPDNPNNPDNPNNPDEPNNPDNPNNPDNPDN) are 11 X 3 AA repeats of P-[DN]-N.

This sequence belongs to the peptidase S1B family. Proteolytically cleaved by aureolysin (aur). This cleavage leads to the activation of SspA.

The protein localises to the secreted. It catalyses the reaction Preferential cleavage: Glu-|-Xaa, Asp-|-Xaa.. Its function is as follows. Preferentially cleaves peptide bonds on the carboxyl-terminal side of aspartate and glutamate. Along with other extracellular proteases it is involved in colonization and infection of human tissues. Required for proteolytic maturation of thiol protease SspB and inactivation of SspC, an inhibitor of SspB. It is the most important protease for degradation of fibronectin-binding protein (FnBP) and surface protein A, which are involved in adherence to host cells. May also protect bacteria against host defense mechanism by cleaving the immunoglobulin classes IgG, IgA and IgM. May be involved in the stability of secreted lipases. This Staphylococcus aureus (strain COL) protein is Glutamyl endopeptidase (sspA).